The chain runs to 285 residues: Alpha-acetolactate decarboxylase (285 aa).

The N-terminal stretch at 1–25 is a signal peptide; that stretch reads MKKNIITSITSLALVAGLSLTAFAA.

Belongs to the alpha-acetolactate decarboxylase family.

It carries out the reaction (2S)-2-acetolactate + H(+) = (R)-acetoin + CO2. The protein operates within polyol metabolism; (R,R)-butane-2,3-diol biosynthesis; (R,R)-butane-2,3-diol from pyruvate: step 2/3. In terms of biological role, converts acetolactate into acetoin, which can be excreted by the cells. This may be a mechanism for controlling the internal pH of cells in the stationary stage. The polypeptide is Alpha-acetolactate decarboxylase (aldB) (Brevibacillus brevis (Bacillus brevis)).